Reading from the N-terminus, the 335-residue chain is GTPase Obg (335 aa).

Residues 1–158 enclose the Obg domain; sequence MFVDQITLEL…RLVELELKLI (158 aa). In terms of domain architecture, OBG-type G spans 159-334; it reads ADIGLVGFPN…LYDLFKSKLS (176 aa). Residues 165–172, 190–194, 215–218, 285–288, and 315–317 contribute to the GTP site; these read GFPNAGKS, FTTLH, DIPG, NKID, and SGL. S172 and T192 together coordinate Mg(2+).

The protein belongs to the TRAFAC class OBG-HflX-like GTPase superfamily. OBG GTPase family. In terms of assembly, monomer. Requires Mg(2+) as cofactor.

It is found in the cytoplasm. Its function is as follows. An essential GTPase which binds GTP, GDP and possibly (p)ppGpp with moderate affinity, with high nucleotide exchange rates and a fairly low GTP hydrolysis rate. Plays a role in control of the cell cycle, stress response, ribosome biogenesis and in those bacteria that undergo differentiation, in morphogenesis control. This is GTPase Obg from Chlamydia trachomatis serovar L2 (strain ATCC VR-902B / DSM 19102 / 434/Bu).